We begin with the raw amino-acid sequence, 618 residues long: Mitochondrial Rho GTPase 1 (618 aa).

Residues 1–592 (MKKDVRILLV…TQADLKSSTF (592 aa)) lie on the Cytoplasmic side of the membrane. Positions 2–168 (KKDVRILLVG…FYYAQKAVLH (167 aa)) constitute a Miro 1 domain. Arg14, Gly16, Lys17, Thr18, and Ser19 together coordinate GTP. Thr18 contacts Mg(2+). Residues Pro35 and Asp57 each coordinate Mg(2+). GTP is bound at residue Ser59. Residue Lys92 is modified to N6-acetyllysine. Asn118, Lys119, Asp121, Ala149, and Lys150 together coordinate GTP. A Glycyl lysine isopeptide (Lys-Gly) (interchain with G-Cter in ubiquitin) cross-link involves residue Lys153. Residues 184–219 (ACIKALTRIFKISDQDNDGTLNDAELNFFQRICFNT) form the EF-hand 1 domain. Residues Asp197, Asp199, Asp201, Thr203, and Glu208 each coordinate Ca(2+). Residue Lys235 forms a Glycyl lysine isopeptide (Lys-Gly) (interchain with G-Cter in ubiquitin) linkage. Positions 304 to 339 (HAYLFLQSTFDKHDLDRDCALSPDELKDLFKVFPYI) constitute an EF-hand 2 domain. Residues Asp317, Asp319, Asp321, Ala323, and Glu328 each contribute to the Ca(2+) site. The region spanning 416–579 (RNVFRCNVIG…FVKLTTMAMY (164 aa)) is the Miro 2 domain. GTP contacts are provided by Asn428, Cys429, Gly430, Lys431, Ser432, Gly433, and Lys447. Asn428 is a binding site for Mg(2+). 15 residues coordinate GDP: Asn428, Cys429, Gly430, Lys431, Ser432, Gly433, Lys447, Lys454, Ser477, Glu478, Lys528, Asp530, Thr558, Cys559, and Asn560. Positions 528, 530, 558, and 559 each coordinate GTP. A Glycyl lysine isopeptide (Lys-Gly) (interchain with G-Cter in ubiquitin) cross-link involves residue Lys572. A helical; Anchor for type IV membrane protein transmembrane segment spans residues 593-615 (WLRASFGATVFAVLGFAMYKALL). The Mitochondrial intermembrane portion of the chain corresponds to 616–618 (KQR).

Belongs to the mitochondrial Rho GTPase family. In terms of assembly, homodimer. Interacts with the kinesin-binding proteins TRAK1/OIP106 and TRAK2/GRIF1, forming a link between mitochondria and the trafficking apparatus of the microtubules. Interacts with RAP1GDS1. Interacts with ARMCX1. Found in a complex with KIF5B, OGT, RHOT2 and TRAK1. In terms of processing, ubiquitinated by PRKN during mitophagy, leading to its degradation and enhancement of mitophagy. Deubiquitinated by USP30. Post-translationally, acetylation on Lys-92 decreases sensitivity of mitochondrial transport to elevated Ca(2+) levels, increases mitochondrial transport and promotes axon growth. Deacetylated by HDAC6 which blocks mitochondrial transport and mediates axon growth inhibition. As to expression, ubiquitously expressed. Expressed at high level in heart and skeletal muscle.

Its subcellular location is the mitochondrion outer membrane. The catalysed reaction is GTP + H2O = GDP + phosphate + H(+). It carries out the reaction ATP + H2O = ADP + phosphate + H(+). The enzyme catalyses UTP + H2O = UDP + phosphate + H(+). Atypical mitochondrial nucleoside-triphosphatase (NTPase) involved in mitochondrial trafficking. Probably involved in control of anterograde transport of mitochondria and their subcellular distribution. Promotes mitochondrial fission during high calcium conditions. Can hydrolyze GTP, ATP and UTP. This is Mitochondrial Rho GTPase 1 (RHOT1) from Homo sapiens (Human).